A 472-amino-acid polypeptide reads, in one-letter code: Chromosomal replication initiator protein DnaA (472 aa).

A domain I, interacts with DnaA modulators region spans residues 1 to 73 (MSNMEQDRWS…LSCWQAELPE (73 aa)). The domain II stretch occupies residues 73-128 (EVNRVDLTVRSPVRCAAPAKEAPAPVESRRDEQRPSAERSNGATPVSANHDALGGS). Residues 89–124 (APAKEAPAPVESRRDEQRPSAERSNGATPVSANHDA) are disordered. Positions 99–109 (ESRRDEQRPSA) are enriched in basic and acidic residues. Polar residues predominate over residues 110–119 (ERSNGATPVS). The tract at residues 129–351 (PLDPRLTFAS…GAINRLLAHS (223 aa)) is domain III, AAA+ region. The ATP site is built by Gly176, Gly178, Lys179, and Thr180. A domain IV, binds dsDNA region spans residues 352–472 (KLNNQPVTLE…VESLKRQLQE (121 aa)).

Belongs to the DnaA family. In terms of assembly, oligomerizes as a right-handed, spiral filament on DNA at oriC.

It is found in the cytoplasm. Plays an essential role in the initiation and regulation of chromosomal replication. ATP-DnaA binds to the origin of replication (oriC) to initiate formation of the DNA replication initiation complex once per cell cycle. Binds the DnaA box (a 9 base pair repeat at the origin) and separates the double-stranded (ds)DNA. Forms a right-handed helical filament on oriC DNA; dsDNA binds to the exterior of the filament while single-stranded (ss)DNA is stabiized in the filament's interior. The ATP-DnaA-oriC complex binds and stabilizes one strand of the AT-rich DNA unwinding element (DUE), permitting loading of DNA polymerase. After initiation quickly degrades to an ADP-DnaA complex that is not apt for DNA replication. Binds acidic phospholipids. The sequence is that of Chromosomal replication initiator protein DnaA from Rhodopseudomonas palustris (strain TIE-1).